A 77-amino-acid polypeptide reads, in one-letter code: UPF0291 protein Bsph_1689 (77 aa).

This sequence belongs to the UPF0291 family.

The protein localises to the cytoplasm. This chain is UPF0291 protein Bsph_1689, found in Lysinibacillus sphaericus (strain C3-41).